A 313-amino-acid chain; its full sequence is Cytochrome c biogenesis protein CcsA (313 aa).

8 helical membrane-spanning segments follow: residues 9-29 (ILTHISFSIVSIVITIHLITF), 44-64 (GIIVTFFCITGLLVTRWVSSG), 71-91 (LYESLIFLSWSFSLIHIIPYF), 111-131 (GFATSGILTEIHQSGILVPAL), 143-163 (MILGYAALLCGSLLSVALLVI), 217-237 (VISLGFTFLTIGILSGAVWAN), 244-264 (WNWDPKETWAFITWIVFAIYL), and 278-298 (AIVASIGFLIIWICYFGVNLL).

This sequence belongs to the CcmF/CycK/Ccl1/NrfE/CcsA family. As to quaternary structure, may interact with Ccs1.

The protein resides in the plastid. It is found in the chloroplast thylakoid membrane. Functionally, required during biogenesis of c-type cytochromes (cytochrome c6 and cytochrome f) at the step of heme attachment. This Solanum lycopersicum (Tomato) protein is Cytochrome c biogenesis protein CcsA.